The following is a 414-amino-acid chain: Probable cell wall biosynthesis protein LcpB (414 aa).

Residues Met-1–Arg-108 are disordered. At Met-1–Cys-120 the chain is on the cytoplasmic side. Over residues Ile-9–Gly-23 the composition is skewed to basic and acidic residues. Pro residues predominate over residues Arg-33 to Pro-42. The span at Pro-43–Arg-53 shows a compositional bias: low complexity. The segment covering Gln-54–Val-80 has biased composition (pro residues). A helical transmembrane segment spans residues Leu-121–Trp-141. Residues Ala-142–Arg-414 are Periplasmic-facing.

It belongs to the LytR/CpsA/Psr (LCP) family.

The protein localises to the cell inner membrane. This chain is Probable cell wall biosynthesis protein LcpB, found in Corynebacterium glutamicum (strain ATCC 13032 / DSM 20300 / JCM 1318 / BCRC 11384 / CCUG 27702 / LMG 3730 / NBRC 12168 / NCIMB 10025 / NRRL B-2784 / 534).